The following is a 95-amino-acid chain: Co-chaperonin GroES (95 aa).

This sequence belongs to the GroES chaperonin family. Heptamer of 7 subunits arranged in a ring. Interacts with the chaperonin GroEL.

It localises to the cytoplasm. In terms of biological role, together with the chaperonin GroEL, plays an essential role in assisting protein folding. The GroEL-GroES system forms a nano-cage that allows encapsulation of the non-native substrate proteins and provides a physical environment optimized to promote and accelerate protein folding. GroES binds to the apical surface of the GroEL ring, thereby capping the opening of the GroEL channel. The chain is Co-chaperonin GroES from Streptococcus mutans serotype c (strain ATCC 700610 / UA159).